Here is a 416-residue protein sequence, read N- to C-terminus: Lipid III flippase (416 aa).

The Cytoplasmic segment spans residues Met1–Lys17. Residues Ile18 to Gly38 form a helical membrane-spanning segment. Topologically, residues Leu39–Gln45 are periplasmic. Residues Leu46–Val66 traverse the membrane as a helical segment. The Cytoplasmic segment spans residues Ala67–Ser84. Residues Ala85–Ile105 form a helical membrane-spanning segment. Residues Ser106 to Leu121 lie on the Periplasmic side of the membrane. Residues Val122–Phe142 form a helical membrane-spanning segment. At Arg143–Asp144 the chain is on the cytoplasmic side. The helical transmembrane segment at Ala145–Val165 threads the bilayer. Over Ser166–Gly174 the chain is Periplasmic. A helical transmembrane segment spans residues Ala175–Ile195. Topologically, residues Lys196–Gln216 are cytoplasmic. Residues Leu217–Met237 form a helical membrane-spanning segment. The Periplasmic segment spans residues Met238–Ser259. A helical membrane pass occupies residues Ile260 to Leu280. Over Ser281–Pro302 the chain is Cytoplasmic. A helical transmembrane segment spans residues Ala303–Leu323. Over Ser324–Phe334 the chain is Periplasmic. Residues Ala335 to Ile355 traverse the membrane as a helical segment. The Cytoplasmic segment spans residues Ala356–Gln370. 2 consecutive transmembrane segments (helical) span residues Phe371–Ala391 and Gln392–Trp412. The Cytoplasmic segment spans residues Arg413–Ala416.

The protein belongs to the polysaccharide transport (PST) (TC 2.A.66.2) family. Probably part of a complex composed of WzxE, WzyE and WzzE.

It localises to the cell inner membrane. It participates in bacterial outer membrane biogenesis; enterobacterial common antigen biosynthesis. Functionally, mediates the transbilayer movement of Und-PP-GlcNAc-ManNAcA-Fuc4NAc (lipid III) from the inner to the outer leaflet of the cytoplasmic membrane during the assembly of enterobacterial common antigen (ECA). Required for the assembly of the phosphoglyceride-linked form of ECA (ECA(PG)) and the water-soluble cyclic form of ECA (ECA(CYC)). Could also mediate the translocation of Und-PP-GlcNAc. This Escherichia coli (strain K12) protein is Lipid III flippase.